The following is a 310-amino-acid chain: Porphobilinogen deaminase (310 aa).

An S-(dipyrrolylmethanemethyl)cysteine modification is found at cysteine 236.

The protein belongs to the HMBS family. Monomer. Dipyrromethane is required as a cofactor.

The enzyme catalyses 4 porphobilinogen + H2O = hydroxymethylbilane + 4 NH4(+). It functions in the pathway porphyrin-containing compound metabolism; protoporphyrin-IX biosynthesis; coproporphyrinogen-III from 5-aminolevulinate: step 2/4. Functionally, tetrapolymerization of the monopyrrole PBG into the hydroxymethylbilane pre-uroporphyrinogen in several discrete steps. The polypeptide is Porphobilinogen deaminase (Nitratiruptor sp. (strain SB155-2)).